We begin with the raw amino-acid sequence, 319 residues long: Lambda-crystallin (319 aa).

An N-acetylalanine modification is found at alanine 2. Serine 3 bears the Phosphoserine mark. Residues 16–17 (LV), aspartate 36, glutamate 97, and lysine 102 each bind NAD(+). Serine 111 is modified (phosphoserine).

Belongs to the 3-hydroxyacyl-CoA dehydrogenase family. As to quaternary structure, homodimer. Detected in eye lens, kidney, liver, heart, lung, brain and testis.

It is found in the cytoplasm. It carries out the reaction L-gulonate + NAD(+) = 3-dehydro-L-gulonate + NADH + H(+). Inhibited by malonate and by inorganic phosphate. Functions as a crystallin in the rabbit eye lens. Has high L-gulonate 3-dehydrogenase activity. It also exhibits low dehydrogenase activity toward L-3-hydroxybutyrate (HBA) and L-threonate. The polypeptide is Lambda-crystallin (CRYL1) (Oryctolagus cuniculus (Rabbit)).